A 364-amino-acid chain; its full sequence is Protein-glutamate methylesterase/protein-glutamine glutaminase (364 aa).

The Response regulatory domain occupies 7–124; that stretch reads RALIVDDSAL…SQNMPDMAEE (118 aa). D58 carries the 4-aspartylphosphate modification. The CheB-type methylesterase domain occupies 167–364; the sequence is ETTSFVRNVL…MAEEIVKIIS (198 aa). Catalysis depends on residues S181, H208, and D308.

The protein belongs to the CheB family. Phosphorylated by CheA. Phosphorylation of the N-terminal regulatory domain activates the methylesterase activity.

The protein resides in the cytoplasm. It catalyses the reaction [protein]-L-glutamate 5-O-methyl ester + H2O = L-glutamyl-[protein] + methanol + H(+). It carries out the reaction L-glutaminyl-[protein] + H2O = L-glutamyl-[protein] + NH4(+). Its function is as follows. Involved in chemotaxis. Part of a chemotaxis signal transduction system that modulates chemotaxis in response to various stimuli. Catalyzes the demethylation of specific methylglutamate residues introduced into the chemoreceptors (methyl-accepting chemotaxis proteins or MCP) by CheR. Also mediates the irreversible deamidation of specific glutamine residues to glutamic acid. In Methanosarcina barkeri (strain Fusaro / DSM 804), this protein is Protein-glutamate methylesterase/protein-glutamine glutaminase.